The chain runs to 425 residues: Serine--tRNA ligase (425 aa).

230–232 (TAE) contributes to the L-serine binding site. 261-263 (RAE) provides a ligand contact to ATP. Position 284 (Glu-284) interacts with L-serine. 348 to 351 (EISS) lines the ATP pocket. Ser-384 serves as a coordination point for L-serine.

The protein belongs to the class-II aminoacyl-tRNA synthetase family. Type-1 seryl-tRNA synthetase subfamily. In terms of assembly, homodimer. The tRNA molecule binds across the dimer.

The protein localises to the cytoplasm. The enzyme catalyses tRNA(Ser) + L-serine + ATP = L-seryl-tRNA(Ser) + AMP + diphosphate + H(+). It carries out the reaction tRNA(Sec) + L-serine + ATP = L-seryl-tRNA(Sec) + AMP + diphosphate + H(+). It functions in the pathway aminoacyl-tRNA biosynthesis; selenocysteinyl-tRNA(Sec) biosynthesis; L-seryl-tRNA(Sec) from L-serine and tRNA(Sec): step 1/1. In terms of biological role, catalyzes the attachment of serine to tRNA(Ser). Is also able to aminoacylate tRNA(Sec) with serine, to form the misacylated tRNA L-seryl-tRNA(Sec), which will be further converted into selenocysteinyl-tRNA(Sec). In Zymomonas mobilis subsp. mobilis (strain ATCC 31821 / ZM4 / CP4), this protein is Serine--tRNA ligase.